A 327-amino-acid chain; its full sequence is uncharacterized protein (327 aa).

The S4 RNA-binding domain occupies Lys12–Glu79. Asp136 is an active-site residue.

The protein belongs to the pseudouridine synthase RluA family.

The enzyme catalyses a uridine in RNA = a pseudouridine in RNA. This is an uncharacterized protein from Helicobacter pylori (strain J99 / ATCC 700824) (Campylobacter pylori J99).